Reading from the N-terminus, the 322-residue chain is Sideroflexin-2 (322 aa).

Residue methionine 1 is modified to N-acetylmethionine. The next 5 membrane-spanning stretches (helical) occupy residues 100–122 (MIITGFMLQFYRTMPAVIFWQWV), 142–164 (SVRQMAVSYITATTTAVATAVGM), 174–192 (LVGRWVPFAAVAAANCVNI), 228–250 (VVISRITMAAPGMILLPVLMERL), and 265–287 (PLQVLLSGCFLIFMVPVACGLFP).

The protein belongs to the sideroflexin family.

It is found in the mitochondrion inner membrane. The protein localises to the mitochondrion outer membrane. It carries out the reaction L-serine(in) = L-serine(out). In terms of biological role, mitochondrial amino-acid transporter that mediates transport of serine into mitochondria. Involved in mitochondrial iron homeostasis by regulating heme biosynthesis. The protein is Sideroflexin-2 of Bos taurus (Bovine).